The following is a 191-amino-acid chain: MKYIEVDEELYRYIAGKTERIGESASDILRRLLGLSVAEVSEVAPVDISEPGMEHEPVQVREAEPEPVPEVEVAAQTEIDFSDLLSEAGLAAQKGAVGRFLYALECLHQAAPSRFEQVLQIQGRDRLYFATSKEALLKASQSANPKEIGSSGFWVTTNNNTAKKRTILEEALVQLGCDPVRAKSLGELALA.

The segment at 96–97 (AV) is interaction with DNA.

Belongs to the SeqA family. As to quaternary structure, homodimer. Polymerizes to form helical filaments.

The protein localises to the cytoplasm. Negative regulator of replication initiation, which contributes to regulation of DNA replication and ensures that replication initiation occurs exactly once per chromosome per cell cycle. Binds to pairs of hemimethylated GATC sequences in the oriC region, thus preventing assembly of replication proteins and re-initiation at newly replicated origins. Repression is relieved when the region becomes fully methylated. This chain is Negative modulator of initiation of replication, found in Shewanella amazonensis (strain ATCC BAA-1098 / SB2B).